The primary structure comprises 423 residues: MAKEKEHINVAFIGHVDHGKSTLIGRLLYETGEIPEHIIEKMRKEAQEKGKATFEFAWVMDRLKEERERGVTIDVAHRKFQTDKYYITIVDCPGHRDFIKNMITGASQADAAVLVMDVVEKVQPQTREHIFLARTLGINQIIVAINKMDRVNYDQKEYEAAKEAVSKLLKMVGYKVDEIPFIPVSAYYGDNVAKKSDKTPWYNGPTLLEAFDLLKPPEKLVDKPLRIPIQDVYSISGVGTVPVGRVESGVLRVGDKVVFEPAGVSGEVKSIEMHHEPIQEAYPGDNIGFNVRGVSKKDIRRGDVAGHPDNPPTVVKDFTAQLVVLQHPTAITVGYTPVVHAHTAQIACRFVELQKKIDPRTGQVKEENPQFLKTGDAAIVKLEPTRPMVIERVKDIPPMGRFAIRDMGMTIGAGMVLDLTPRK.

One can recognise a tr-type G domain in the interval 5–221 (KEHINVAFIG…DLLKPPEKLV (217 aa)). Positions 14 to 21 (GHVDHGKS) are G1. 14-21 (GHVDHGKS) contributes to the GTP binding site. Ser-21 is a Mg(2+) binding site. Residues 70 to 74 (GVTID) form a G2 region. The segment at 91-94 (DCPG) is G3. GTP-binding positions include 91 to 95 (DCPGH) and 146 to 149 (NKMD). Positions 146–149 (NKMD) are G4. Positions 185 to 187 (SAY) are G5.

The protein belongs to the TRAFAC class translation factor GTPase superfamily. Classic translation factor GTPase family. EF-Tu/EF-1A subfamily.

It is found in the cytoplasm. It catalyses the reaction GTP + H2O = GDP + phosphate + H(+). In terms of biological role, GTP hydrolase that promotes the GTP-dependent binding of aminoacyl-tRNA to the A-site of ribosomes during protein biosynthesis. This is Elongation factor 1-alpha from Archaeoglobus fulgidus (strain ATCC 49558 / DSM 4304 / JCM 9628 / NBRC 100126 / VC-16).